The chain runs to 98 residues: uncharacterized protein (98 aa).

In terms of domain architecture, MOSC spans 30-98; it reads KKVVPSVKIH…RRKFCRVRLE (69 aa).

This is an uncharacterized protein from Haemophilus influenzae (strain ATCC 51907 / DSM 11121 / KW20 / Rd).